Consider the following 159-residue polypeptide: uncharacterized protein (159 aa).

The next 3 membrane-spanning stretches (helical) occupy residues 17–37 (FFFF…NLSS), 44–64 (WLIV…PLPI), and 67–87 (FSGA…DLIA).

Its subcellular location is the membrane. This is an uncharacterized protein from Saccharomyces cerevisiae (strain ATCC 204508 / S288c) (Baker's yeast).